Reading from the N-terminus, the 534-residue chain is Hypothemycin biosynthesis cluster protein hpm4 (534 aa).

3 disordered regions span residues 34–61 (IEPA…SDGP), 110–130 (LQSP…PLRL), and 236–287 (DGTG…KKCI). 2 stretches are compositionally biased toward low complexity: residues 112 to 127 (SPTT…SCAP) and 258 to 275 (TVSS…ACQT).

The protein operates within secondary metabolite biosynthesis. Part of the gene cluster that mediates the biosynthesis of hypothemycin, a resorcylic acid lactone (RAL) that irreversibly inhibits a subset of protein kinases with a conserved cysteine in the ATP binding site such as human ERK2. The first step is performed by both PKSs hmp3 and hmp8 and leads to the production of 7',8'-dehydrozearalenol (DHZ). The highly reducing PKS hpm8 synthesizes the reduced hexaketide (7S,11S,2E,8E)-7,11-dihydroxy-dodeca-2,8-dienoate, which is transferred downstream to the non-reducing PKS hpm3. Hpm3 then extends the reduced hexaketide to a nonaketide, after which regioselective cyclization and macrolactonization affords DHZ. The next step is the conversion of DHZ into aigialomycin C and is performed by the O-methyltransferase hmp5, the FAD-binding monooxygenase hmp7, and the cytochrome P450 monooxygenase hmp1. The wide substrate tolerance of the hmp5 and hmp7 implies that the reactions from DHZ to aigialomycin C can occur in any order. The steps from aigialomycin C to hypothemycin are less well established. The FAD-linked oxidoreductase hmp9 presumably catalyzes oxidation of the C-6' hydroxyl to a ketone. The timing of this oxidation is important, since the resulting enone functional group is a Michael acceptor that can react spontaneously with glutathione, an abundant metabolite in fungal cells. The glutathione S-transferase hmp2 catalyzes cis-trans isomerization of the 7',8' double bond with equilibrium favoring the trans isomer. The hpm6-encoded transporter might preferentially pump hypothemycin out of the cell relative to the trans isomer aigialomycin A. The cis-to-trans isomerization may be coupled with C-4' hydroxylation, since all known hypothemycin analogs containing the enone functional group also have hydroxyl groups at both C-4' and C-5'. In Hypomyces subiculosus (Nectria subiculosa), this protein is Hypothemycin biosynthesis cluster protein hpm4.